The chain runs to 367 residues: Glycolate oxidase 1 (367 aa).

An N-acetylmethionine modification is found at Met1. A glyoxylate-binding site is contributed by Tyr24. FMN is bound by residues 77–79 (PTA), Ser106, 127–129 (QLY), and Thr155. Tyr129 contacts glyoxylate. Arg164 provides a ligand contact to glyoxylate. 2 residues coordinate FMN: Lys230 and Ser252. Glyoxylate-binding residues include His254 and Arg257. His254 acts as the Proton acceptor in catalysis. FMN is bound by residues 285–289 (DGGVR) and 308–309 (GR).

The protein belongs to the FMN-dependent alpha-hydroxy acid dehydrogenase family. Homotetramer. Requires FMN as cofactor.

The protein resides in the peroxisome. It carries out the reaction glycolate + O2 = glyoxylate + H2O2. Its pathway is photosynthesis; photorespiration; glycine from 2-phosphoglycolate: step 2/3. Catalyzes the oxidation of glycolate to glyoxylate, with a reduction of O2 to H2O2. Is a key enzyme in photorespiration in green plants. The chain is Glycolate oxidase 1 (GLO1) from Arabidopsis thaliana (Mouse-ear cress).